The sequence spans 385 residues: Glucans biosynthesis protein C (385 aa).

Helical transmembrane passes span 17 to 37 (AWLM…SHTW), 60 to 80 (MQVF…RYPL), 91 to 111 (VGIP…IMLQ), 137 to 157 (ISHL…VWIF), 173 to 193 (KFSM…YAVI), 212 to 232 (FIVM…LAFI), 239 to 259 (LFTT…VAYL), 274 to 294 (TESV…FSFG), 311 to 331 (ASLF…AYIT), and 338 to 358 (WLGF…LYEI).

This sequence belongs to the acyltransferase 3 family. OpgC subfamily.

The protein resides in the cell membrane. Its pathway is glycan metabolism; osmoregulated periplasmic glucan (OPG) biosynthesis. In terms of biological role, necessary for the succinyl substitution of periplasmic glucans. Could catalyze the transfer of succinyl residues from the cytoplasmic side of the membrane to the nascent glucan backbones on the periplasmic side of the membrane. The sequence is that of Glucans biosynthesis protein C from Escherichia coli O139:H28 (strain E24377A / ETEC).